A 509-amino-acid chain; its full sequence is Bifunctional pantoate ligase/cytidylate kinase (509 aa).

Residues Met-1 to Val-275 are pantoate--beta-alanine ligase. Residue Met-29 to His-36 coordinates ATP. His-36 (proton donor) is an active-site residue. Gln-61 is a (R)-pantoate binding site. Position 61 (Gln-61) interacts with beta-alanine. Gly-149–Asp-152 lines the ATP pocket. Residue Gln-155 coordinates (R)-pantoate. Leu-186–Arg-189 contributes to the ATP binding site. The segment at Phe-276–Lys-509 is cytidylate kinase.

It in the N-terminal section; belongs to the pantothenate synthetase family. In the C-terminal section; belongs to the cytidylate kinase family. Type 1 subfamily.

It is found in the cytoplasm. It carries out the reaction (R)-pantoate + beta-alanine + ATP = (R)-pantothenate + AMP + diphosphate + H(+). It catalyses the reaction CMP + ATP = CDP + ADP. The catalysed reaction is dCMP + ATP = dCDP + ADP. It participates in cofactor biosynthesis; (R)-pantothenate biosynthesis; (R)-pantothenate from (R)-pantoate and beta-alanine: step 1/1. In terms of biological role, catalyzes the condensation of pantoate with beta-alanine in an ATP-dependent reaction via a pantoyl-adenylate intermediate. Functionally, catalyzes the transfer of a phosphate group from ATP to either CMP or dCMP to form CDP or dCDP and ADP, respectively. This Prochlorococcus marinus (strain AS9601) protein is Bifunctional pantoate ligase/cytidylate kinase.